The chain runs to 163 residues: ATP synthase subunit b (163 aa).

A helical membrane pass occupies residues 10-29 (ALYQLLAFSVLLFFLSKFAL).

The protein belongs to the ATPase B chain family. In terms of assembly, F-type ATPases have 2 components, F(1) - the catalytic core - and F(0) - the membrane proton channel. F(1) has five subunits: alpha(3), beta(3), gamma(1), delta(1), epsilon(1). F(0) has three main subunits: a(1), b(2) and c(10-14). The alpha and beta chains form an alternating ring which encloses part of the gamma chain. F(1) is attached to F(0) by a central stalk formed by the gamma and epsilon chains, while a peripheral stalk is formed by the delta and b chains.

The protein resides in the cell membrane. F(1)F(0) ATP synthase produces ATP from ADP in the presence of a proton or sodium gradient. F-type ATPases consist of two structural domains, F(1) containing the extramembraneous catalytic core and F(0) containing the membrane proton channel, linked together by a central stalk and a peripheral stalk. During catalysis, ATP synthesis in the catalytic domain of F(1) is coupled via a rotary mechanism of the central stalk subunits to proton translocation. In terms of biological role, component of the F(0) channel, it forms part of the peripheral stalk, linking F(1) to F(0). This chain is ATP synthase subunit b, found in Alkalihalophilus pseudofirmus (strain ATCC BAA-2126 / JCM 17055 / OF4) (Bacillus pseudofirmus).